A 321-amino-acid polypeptide reads, in one-letter code: D-alanine--D-alanine ligase (321 aa).

In terms of domain architecture, ATP-grasp spans arginine 121 to lysine 315. Residue proline 147–glutamine 199 participates in ATP binding. Residues glutamate 268, glutamate 282, and asparagine 284 each contribute to the Mg(2+) site.

The protein belongs to the D-alanine--D-alanine ligase family. Mg(2+) is required as a cofactor. It depends on Mn(2+) as a cofactor.

Its subcellular location is the cytoplasm. The enzyme catalyses 2 D-alanine + ATP = D-alanyl-D-alanine + ADP + phosphate + H(+). It functions in the pathway cell wall biogenesis; peptidoglycan biosynthesis. In terms of biological role, cell wall formation. The polypeptide is D-alanine--D-alanine ligase (Rickettsia massiliae (strain Mtu5)).